Consider the following 319-residue polypeptide: MITVNEKEHILEQKYRPSTIDECILPAFDKETFKSITSKGKIPHIILHSPSPGTGKTTVAKALCHDVNADMMFVNGSDCKIDFVRGPLTNFASAASFDGRQKVIVIDEFDRSGLAESQRHLRSFMEAYSSNCSIIITANNIDGIIKPLQSRCRVITFGQPTDEDKIEMMKQMIRRLTEICKHEGIAIADMKVVAALVKKNFPDFRKTIGELDSYSSKGVLDAGILSLVTNDRGAIDDVLESLKNKDVKQLRALAPKYAADYSWFVGKLAEEIYSRVTPQSIIRMYEIVGENNQYHGIAANTELHLAYLFIQLACEMQWK.

ATP is bound by residues Glu-12–Tyr-15, Ile-24, Gly-53–Thr-58, and Arg-205.

The protein belongs to the Tevenvirinae sliding-clamp-loader large subunit family. In terms of assembly, the sliding-clamp-loader consists of 4 large subunits and 1 small subunit. Interacts with the sliding clamp; this interaction allows the sliding-clamp-loader to open the sliding clamp. Part of the replicase complex that includes the DNA polymerase, the polymerase clamp, the clamp loader complex, the single-stranded DNA binding protein, the primase, the helicase and the helicase assembly factor.

Its function is as follows. Forms the sliding-clamp-loader together with the small subunit. Functions as an ATPase enzyme. The clamp loader holds the clamp in an open conformation and places it onto the DNA. 4 ATP molecules must bind to the sliding-clamp-loader before the latter can open the sliding clamp. ATP hydrolysis triggers the detachment of the sliding clamp from the sliding-clamp-loader, freeing the sliding clamp to track along DNA. The chain is Sliding-clamp-loader large subunit (44) from Enterobacteria phage T4 (Bacteriophage T4).